The primary structure comprises 1901 residues: Methylcytosine dioxygenase tet3 (1901 aa).

The CXXC-type zinc finger occupies 58-99 (SNKKRKRCGVCVPCLRKEPCGACYNCVNRSTSHQICKMRKCE). 8 residues coordinate Zn(2+): C65, C68, C71, C77, C80, C83, C93, and C98. Disordered regions lie at residues 434–455 (KNAL…KKSS), 602–658 (WWVP…EGSA), 751–787 (KDQC…QNDL), and 808–867 (DFSL…PVSR). Polar residues-rich tracts occupy residues 442-455 (SPRQ…KKSS) and 602-614 (WWVP…PVSK). Basic residues predominate over residues 640-652 (KPQRKQVQIKKPK). The segment covering 758–771 (STHDTSSSSGQGDS) has biased composition (low complexity). The segment covering 847–867 (ENSTKPATHSNPALSNNPVSR) has biased composition (polar residues). C957, C959, C1017, H1043, and C1045 together coordinate Zn(2+). 2-oxoglutarate is bound at residue R1085. Residues C1095, C1097, C1113, C1122, and C1182 each coordinate Zn(2+). C1198 is a 2-oxoglutarate binding site. H1204 contacts Zn(2+). Residues H1206 and D1208 each contribute to the Fe cation site. H1240 is a binding site for 2-oxoglutarate. Disordered regions lie at residues 1282–1338 (SEPA…QQTK), 1457–1501 (YGSE…VETT), 1591–1624 (SNAP…PGKV), and 1680–1745 (SATP…DEEI). Positions 1291–1325 (RQLEAKKAAAEKKKLQKEKLVSPDKTKQEPSDKKT) are enriched in basic and acidic residues. Residues 1326-1338 (CQQNPGVPQQQTK) show a composition bias toward polar residues. The span at 1465-1474 (SFRRSSEVPH) shows a compositional bias: basic and acidic residues. Residues 1477–1487 (SLQNPSSQKSV) show a composition bias toward polar residues. Polar residues-rich tracts occupy residues 1680–1693 (SATP…TPCS) and 1702–1719 (SFPN…SQNH). Residue H1780 participates in Fe cation binding. Position 1795–1797 (1795–1797 (RIS)) interacts with 2-oxoglutarate.

The protein belongs to the TET family. It depends on Fe(2+) as a cofactor. Requires Zn(2+) as cofactor.

It localises to the nucleus. Its subcellular location is the chromosome. It catalyses the reaction a 5-methyl-2'-deoxycytidine in DNA + 2-oxoglutarate + O2 = a 5-hydroxymethyl-2'-deoxycytidine in DNA + succinate + CO2. It carries out the reaction a 5-hydroxymethyl-2'-deoxycytidine in DNA + 2-oxoglutarate + O2 = a 5-formyl-2'-deoxycytidine in DNA + succinate + CO2 + H2O. The enzyme catalyses a 5-formyl-2'-deoxycytidine in DNA + 2-oxoglutarate + O2 = a 5-carboxyl-2'-deoxycytidine in DNA + succinate + CO2 + H(+). Dioxygenase that catalyzes the conversion of the modified genomic base 5-methylcytosine (5mC) into 5-hydroxymethylcytosine (5hmC) and plays a key role in epigenetic chromatin reprogramming during embryonic development. Conversion of 5mC into 5hmC probably constitutes the first step in cytosine demethylation. Selectively binds to the promoter region of target genes and contributes to regulate the expression of numerous developmental genes, including pax6, rax, sox9 and six3. May also contribute to the regulation of target genes in ways that do not require its enzyme activity. This chain is Methylcytosine dioxygenase tet3, found in Xenopus tropicalis (Western clawed frog).